The primary structure comprises 321 residues: Putative zinc finger CCCH domain-containing protein 9 (321 aa).

Disordered regions lie at residues 1 to 59 and 181 to 269; these read MADA…PGKK and REAE…NLQE. Positions 10–29 are enriched in basic and acidic residues; it reads EAERRSDETESRSIKEPKEK. A C3H1-type zinc finger spans residues 55-83; it reads RPGKKDCQFYLKNGLCRYRSSCRFNHPTQ. Residues 164–290 are a coiled coil; the sequence is TEWRFERERM…EARLRLEQIR (127 aa). 2 stretches are compositionally biased toward basic and acidic residues: residues 181 to 224 and 231 to 244; these read REAE…REAQ and RQRDSIERQRREAQ.

The polypeptide is Putative zinc finger CCCH domain-containing protein 9 (Arabidopsis thaliana (Mouse-ear cress)).